The chain runs to 462 residues: CUGBP Elav-like family member 3-B (462 aa).

3 consecutive RRM domains span residues 7–88 (IKLF…PADS), 95–175 (RKLF…FADT), and 377–455 (CNIF…LKRP).

The protein belongs to the CELF/BRUNOL family.

It localises to the nucleus. It is found in the cytoplasm. RNA-binding protein that may be involved in the regulation of pre-mRNA alternative splicing. The polypeptide is CUGBP Elav-like family member 3-B (tnrc4-b) (Xenopus laevis (African clawed frog)).